Consider the following 179-residue polypeptide: Orotate phosphoribosyltransferase (179 aa).

5-phospho-alpha-D-ribose 1-diphosphate-binding positions include arginine 94, lysine 95, lysine 98, histidine 100, and 120-128; that span reads EDTSTTGNS. Orotate contacts are provided by threonine 124 and arginine 152.

This sequence belongs to the purine/pyrimidine phosphoribosyltransferase family. PyrE subfamily. In terms of assembly, homodimer. Mg(2+) serves as cofactor.

It catalyses the reaction orotidine 5'-phosphate + diphosphate = orotate + 5-phospho-alpha-D-ribose 1-diphosphate. Its pathway is pyrimidine metabolism; UMP biosynthesis via de novo pathway; UMP from orotate: step 1/2. Its function is as follows. Catalyzes the transfer of a ribosyl phosphate group from 5-phosphoribose 1-diphosphate to orotate, leading to the formation of orotidine monophosphate (OMP). This Mycobacterium avium (strain 104) protein is Orotate phosphoribosyltransferase.